We begin with the raw amino-acid sequence, 113 residues long: Hydrogenase maturation factor HypA (113 aa).

Position 2 (H2) interacts with Ni(2+). 4 residues coordinate Zn(2+): C73, C76, C89, and C92.

Belongs to the HypA/HybF family.

In terms of biological role, involved in the maturation of [NiFe] hydrogenases. Required for nickel insertion into the metal center of the hydrogenase. This Xanthobacter autotrophicus (strain ATCC BAA-1158 / Py2) protein is Hydrogenase maturation factor HypA.